Consider the following 642-residue polypeptide: Acid beta-fructofuranosidase (642 aa).

Residues 1-22 (MRNDSPYTPLLNASHNNHRRRE) are Cytoplasmic-facing. Positions 1–95 (MRNDSPYTPL…LSGNLVGEGG (95 aa)) are cleaved as a propeptide — removed in mature form. Residues 23 to 43 (LLLLFSGLLLLASIIAFSAYI) form a helical; Signal-anchor for type II membrane protein membrane-spanning segment. The Lumenal segment spans residues 44–642 (AQPHADADVS…YHPDQKRQTS (599 aa)). N-linked (GlcNAc...) asparagine glycosylation occurs at Asn-100. Substrate is bound by residues 119–122 (WMND), Gln-138, Trp-146, 181–182 (WT), and 245–246 (RD). Asp-122 is a catalytic residue. Asn-267 is a glycosylation site (N-linked (GlcNAc...) asparagine). Positions 300 and 333 each coordinate substrate. An intrachain disulfide couples Cys-490 to Cys-538. Asn-491 and Asn-615 each carry an N-linked (GlcNAc...) asparagine glycan.

Belongs to the glycosyl hydrolase 32 family. May be present in two forms, a 70 kDa monomer and a heterodimer of the 30 kDa and 38 kDa subunits. The ratio of the levels of the two forms within cells appears to be regulated developmentally.

Its subcellular location is the membrane. It localises to the vacuole. The protein localises to the vacuole lumen. The enzyme catalyses Hydrolysis of terminal non-reducing beta-D-fructofuranoside residues in beta-D-fructofuranosides.. It functions in the pathway glycan biosynthesis; sucrose metabolism. The chain is Acid beta-fructofuranosidase (VCINV) from Vicia faba (Broad bean).